The chain runs to 671 residues: DNA ligase (671 aa).

NAD(+)-binding positions include 31-35 (DAEYD), 80-81 (SL), and glutamate 110. The active-site N6-AMP-lysine intermediate is the lysine 112. NAD(+)-binding residues include arginine 133, glutamate 167, lysine 283, and lysine 307. Positions 401, 404, 419, and 424 each coordinate Zn(2+). The BRCT domain occupies 587 to 671 (EEELVFAGKT…YLPDEGGLNE (85 aa)).

Belongs to the NAD-dependent DNA ligase family. LigA subfamily. Mg(2+) is required as a cofactor. Mn(2+) serves as cofactor.

The enzyme catalyses NAD(+) + (deoxyribonucleotide)n-3'-hydroxyl + 5'-phospho-(deoxyribonucleotide)m = (deoxyribonucleotide)n+m + AMP + beta-nicotinamide D-nucleotide.. Functionally, DNA ligase that catalyzes the formation of phosphodiester linkages between 5'-phosphoryl and 3'-hydroxyl groups in double-stranded DNA using NAD as a coenzyme and as the energy source for the reaction. It is essential for DNA replication and repair of damaged DNA. The sequence is that of DNA ligase from Listeria innocua serovar 6a (strain ATCC BAA-680 / CLIP 11262).